Here is a 386-residue protein sequence, read N- to C-terminus: Decapping nuclease RAI1 (386 aa).

Substrate is bound at residue Arg-34. An a divalent metal cation-binding site is contributed by Glu-159. Position 205 (Glu-205) interacts with substrate. Residues Asp-207, Glu-225, and Leu-226 each coordinate a divalent metal cation. Substrate is bound by residues Lys-227 and Gln-251.

Belongs to the DXO/Dom3Z family. In terms of assembly, interacts with RAT1; the interaction is direct, stabilizes RAT1 protein structure and stimulates its exoribonuclease activity. The interaction also stimulates RAI1 pyrophosphohydrolase activity, probably by recruiting it to mRNA substrates. The cofactor is a divalent metal cation.

The protein resides in the nucleus. It catalyses the reaction a 5'-end NAD(+)-phospho-ribonucleoside in mRNA + H2O = a 5'-end phospho-ribonucleoside in mRNA + NAD(+) + H(+). The enzyme catalyses a 5'-end (N(7)-methyl 5'-triphosphoguanosine)-ribonucleoside-ribonucleotide in mRNA + H2O = a (N(7)-methyl 5'-triphosphoguanosine)-nucleoside + a 5'-end phospho-ribonucleoside in mRNA + H(+). The catalysed reaction is a 5'-end triphospho-ribonucleoside in mRNA + H2O = a 5'-end phospho-ribonucleoside in mRNA + diphosphate + H(+). In terms of biological role, decapping enzyme for NAD-capped RNAs: specifically hydrolyzes the nicotinamide adenine dinucleotide (NAD) cap from a subset of RNAs by removing the entire NAD moiety from the 5'-end of an NAD-capped RNA. The NAD-cap is present at the 5'-end of some RNAs and snoRNAs. In contrast to the canonical 5'-end N7 methylguanosine (m7G) cap, the NAD cap promotes mRNA decay. Also acts as a non-canonical decapping enzyme that removes the entire cap structure of m7G capped or incompletely capped RNAs. Has decapping activity toward incomplete 5'-end m7G cap mRNAs such as unmethylated 5'-end-capped RNA (cap0), while it has no activity toward 2'-O-ribose methylated m7G cap (cap1). Also possesses RNA 5'-pyrophosphohydrolase activity by hydrolyzing the 5'-end triphosphate to release pyrophosphates. Stimulates exoribonuclease activity of Rat1, allowing it to degrade RNAs with stable secondary structure more effectively. This is Decapping nuclease RAI1 (RAI1) from Cryptococcus neoformans var. neoformans serotype D (strain B-3501A) (Filobasidiella neoformans).